Consider the following 250-residue polypeptide: Coproheme decarboxylase (250 aa).

Fe-coproporphyrin III-binding positions include Arg131, 145–149 (YPMNK), His172, and Gln185. Tyr145 is an active-site residue.

Belongs to the ChdC family. Type 1 subfamily. Requires Fe-coproporphyrin III as cofactor.

The catalysed reaction is Fe-coproporphyrin III + 2 H2O2 + 2 H(+) = heme b + 2 CO2 + 4 H2O. It catalyses the reaction Fe-coproporphyrin III + H2O2 + H(+) = harderoheme III + CO2 + 2 H2O. The enzyme catalyses harderoheme III + H2O2 + H(+) = heme b + CO2 + 2 H2O. Its pathway is porphyrin-containing compound metabolism; protoheme biosynthesis. Involved in coproporphyrin-dependent heme b biosynthesis. Catalyzes the decarboxylation of Fe-coproporphyrin III (coproheme) to heme b (protoheme IX), the last step of the pathway. The reaction occurs in a stepwise manner with a three-propionate intermediate. The polypeptide is Coproheme decarboxylase (Staphylococcus aureus (strain bovine RF122 / ET3-1)).